The primary structure comprises 262 residues: Type III pantothenate kinase (262 aa).

Asp-9 to Lys-16 is a binding site for ATP. Substrate is bound by residues Tyr-103 and Gly-110–Arg-113. Residue Asp-112 is the Proton acceptor of the active site. Asp-134 serves as a coordination point for K(+). Residue Thr-137 participates in ATP binding. Substrate is bound at residue Thr-190.

This sequence belongs to the type III pantothenate kinase family. In terms of assembly, homodimer. NH4(+) serves as cofactor. Requires K(+) as cofactor.

It is found in the cytoplasm. The catalysed reaction is (R)-pantothenate + ATP = (R)-4'-phosphopantothenate + ADP + H(+). The protein operates within cofactor biosynthesis; coenzyme A biosynthesis; CoA from (R)-pantothenate: step 1/5. Its function is as follows. Catalyzes the phosphorylation of pantothenate (Pan), the first step in CoA biosynthesis. The polypeptide is Type III pantothenate kinase (Nitratidesulfovibrio vulgaris (strain DSM 19637 / Miyazaki F) (Desulfovibrio vulgaris)).